The following is a 319-amino-acid chain: Acetyl-coenzyme A carboxylase carboxyl transferase subunit alpha (319 aa).

Residues arginine 39 to glutamate 293 enclose the CoA carboxyltransferase C-terminal domain.

Belongs to the AccA family. In terms of assembly, acetyl-CoA carboxylase is a heterohexamer composed of biotin carboxyl carrier protein (AccB), biotin carboxylase (AccC) and two subunits each of ACCase subunit alpha (AccA) and ACCase subunit beta (AccD).

It is found in the cytoplasm. The enzyme catalyses N(6)-carboxybiotinyl-L-lysyl-[protein] + acetyl-CoA = N(6)-biotinyl-L-lysyl-[protein] + malonyl-CoA. It participates in lipid metabolism; malonyl-CoA biosynthesis; malonyl-CoA from acetyl-CoA: step 1/1. Its function is as follows. Component of the acetyl coenzyme A carboxylase (ACC) complex. First, biotin carboxylase catalyzes the carboxylation of biotin on its carrier protein (BCCP) and then the CO(2) group is transferred by the carboxyltransferase to acetyl-CoA to form malonyl-CoA. This chain is Acetyl-coenzyme A carboxylase carboxyl transferase subunit alpha, found in Neisseria meningitidis serogroup A / serotype 4A (strain DSM 15465 / Z2491).